A 329-amino-acid polypeptide reads, in one-letter code: Quinate dehydrogenase (329 aa).

The enzyme catalyses L-quinate + NAD(+) = 3-dehydroquinate + NADH + H(+). It functions in the pathway aromatic compound metabolism; 3,4-dihydroxybenzoate biosynthesis; 3-dehydroquinate from D-quinate (NAD(+) route): step 1/1. The protein is Quinate dehydrogenase (qutB) of Emericella nidulans (strain FGSC A4 / ATCC 38163 / CBS 112.46 / NRRL 194 / M139) (Aspergillus nidulans).